The primary structure comprises 451 residues: Trigger factor (451 aa).

The PPIase FKBP-type domain occupies 165–250; that stretch reads DDKLTIDFEG…LHQIQAREAL (86 aa).

It belongs to the FKBP-type PPIase family. Tig subfamily.

The protein resides in the cytoplasm. It catalyses the reaction [protein]-peptidylproline (omega=180) = [protein]-peptidylproline (omega=0). Its function is as follows. Involved in protein export. Acts as a chaperone by maintaining the newly synthesized protein in an open conformation. Functions as a peptidyl-prolyl cis-trans isomerase. The protein is Trigger factor of Helicobacter pylori (strain G27).